Consider the following 738-residue polypeptide: Catalase-peroxidase 2 (738 aa).

Positions 1–26 (MKRTLPTLSALALSMSLALAAGQTQA) are cleaved as a signal peptide. Residues 104 to 226 (WHSAGVYRIF…LGATQMGLIY (123 aa)) constitute a cross-link (tryptophyl-tyrosyl-methioninium (Trp-Tyr) (with M-252)). Catalysis depends on histidine 105, which acts as the Proton acceptor. The tryptophyl-tyrosyl-methioninium (Tyr-Met) (with W-104) cross-link spans 226–252 (YVNPEGPNGVPDPLAAARDIRETFGRM). Position 267 (histidine 267) interacts with heme b.

Belongs to the peroxidase family. Peroxidase/catalase subfamily. Homodimer or homotetramer. It depends on heme b as a cofactor. Post-translationally, formation of the three residue Trp-Tyr-Met cross-link is important for the catalase, but not the peroxidase activity of the enzyme.

It catalyses the reaction H2O2 + AH2 = A + 2 H2O. It carries out the reaction 2 H2O2 = O2 + 2 H2O. In terms of biological role, bifunctional enzyme with both catalase and broad-spectrum peroxidase activity. The protein is Catalase-peroxidase 2 of Shewanella amazonensis (strain ATCC BAA-1098 / SB2B).